Reading from the N-terminus, the 538-residue chain is Cytochrome P450 monooxygenase xanG (538 aa).

A helical transmembrane segment spans residues 44–64 (MILYYLASIPLAIICYLAWYL). Asn378 carries N-linked (GlcNAc...) asparagine glycosylation. Cys489 contacts heme.

It belongs to the cytochrome P450 family. It depends on heme as a cofactor.

It is found in the membrane. Its pathway is secondary metabolite biosynthesis. Functionally, cytochrome P450 monooxygenase; part of the gene cluster that mediates the biosynthesis of the isocyanide xanthocillin and its derivatives. The first step of the pathway consists in the conversion of tyrosine into a vinyl-isonitrile intermediate by the isocyanide synthase xanB. Subsequent oxidative dimerization of this intermediate to form xanthocillin may involve the cytochrome P450 monooxygenase xanG, whose expression is coregulated with that of XanB. Xanthocillin can be further modified by the isonitrile hydratase-like protein xanA which introduces N-formyl groups and the methyltransferase xanE which introduces methyl groups, leading to the production of several derivatives including fumiformamide. Finally, fumiformamide can be subject to both oxidative and reductive cyclization to yield melanocins E and F, respectively. The sequence is that of Cytochrome P450 monooxygenase xanG from Aspergillus fumigatus (strain ATCC MYA-4609 / CBS 101355 / FGSC A1100 / Af293) (Neosartorya fumigata).